The sequence spans 67 residues: Nigrocin-2GRc (67 aa).

Positions 1-22 (MFTMKKSMLLLFFLGTISLSLC) are cleaved as a signal peptide. The propeptide occupies 23–46 (EQERNADEEERRDEEVAKMEEIKR). A disulfide bridge connects residues C61 and C67.

As to expression, expressed by the skin glands.

It is found in the secreted. Its function is as follows. Antimicrobial peptide active at least against the Gram-positive bacterium S.aureus but with otherwise unclear activity spectrum. Lacks hemolytic activity against rabbit or human erythrocytes. This is Nigrocin-2GRc from Odorrana grahami (Yunnanfu frog).